The primary structure comprises 314 residues: uncharacterized protein (314 aa).

Positions 68–91 are enriched in basic and acidic residues; that stretch reads EKKKKSSSFEKRDKRRVQLKEKSP. 2 disordered regions span residues 68 to 97 and 141 to 164; these read EKKK…TPRN and MDVQ…RPAS. Positions 144–157 are enriched in polar residues; the sequence is QSPSTMSTSKNNVR.

It localises to the mitochondrion. This is an uncharacterized protein from Schizosaccharomyces pombe (strain 972 / ATCC 24843) (Fission yeast).